A 151-amino-acid chain; its full sequence is 3-hydroxyacyl-[acyl-carrier-protein] dehydratase FabZ (151 aa).

Histidine 49 is a catalytic residue.

Belongs to the thioester dehydratase family. FabZ subfamily.

The protein localises to the cytoplasm. It carries out the reaction a (3R)-hydroxyacyl-[ACP] = a (2E)-enoyl-[ACP] + H2O. In terms of biological role, involved in unsaturated fatty acids biosynthesis. Catalyzes the dehydration of short chain beta-hydroxyacyl-ACPs and long chain saturated and unsaturated beta-hydroxyacyl-ACPs. The sequence is that of 3-hydroxyacyl-[acyl-carrier-protein] dehydratase FabZ from Wolinella succinogenes (strain ATCC 29543 / DSM 1740 / CCUG 13145 / JCM 31913 / LMG 7466 / NCTC 11488 / FDC 602W) (Vibrio succinogenes).